The sequence spans 573 residues: DNA ligase (573 aa).

Glu-250 is an ATP binding site. Lys-252 acts as the N6-AMP-lysine intermediate in catalysis. Residues Arg-257, Arg-272, Glu-301, Phe-342, Arg-432, and Lys-438 each coordinate ATP.

It belongs to the ATP-dependent DNA ligase family. The cofactor is Mg(2+).

It catalyses the reaction ATP + (deoxyribonucleotide)n-3'-hydroxyl + 5'-phospho-(deoxyribonucleotide)m = (deoxyribonucleotide)n+m + AMP + diphosphate.. In terms of biological role, DNA ligase that seals nicks in double-stranded DNA during DNA replication, DNA recombination and DNA repair. The protein is DNA ligase of Methanococcus vannielii (strain ATCC 35089 / DSM 1224 / JCM 13029 / OCM 148 / SB).